The chain runs to 1158 residues: Putative HERC2-like protein 3 (1158 aa).

Positions 281–302 are disordered; sequence PRKKRVPKKPESTDDEEKIGNE. Acidic residues predominate over residues 293-302; it reads TDDEEKIGNE. The MIB/HERC2 domain occupies 587 to 660; the sequence is SGPELAAMMK…NYDLKLAELP (74 aa). Residues 662 to 684 are disordered; sequence PAQPSAEDSDTEDDSEAEQTERN. Residues 668 to 679 show a composition bias toward acidic residues; sequence EDSDTEDDSEAE.

In Homo sapiens (Human), this protein is Putative HERC2-like protein 3 (HERC2P3).